Consider the following 167-residue polypeptide: ATP synthase subunit b (167 aa).

Residues 10 to 30 (TFFFQLANTLIMFLILKHFLF) traverse the membrane as a helical segment.

This sequence belongs to the ATPase B chain family. F-type ATPases have 2 components, F(1) - the catalytic core - and F(0) - the membrane proton channel. F(1) has five subunits: alpha(3), beta(3), gamma(1), delta(1), epsilon(1). F(0) has three main subunits: a(1), b(2) and c(10-14). The alpha and beta chains form an alternating ring which encloses part of the gamma chain. F(1) is attached to F(0) by a central stalk formed by the gamma and epsilon chains, while a peripheral stalk is formed by the delta and b chains.

Its subcellular location is the cell membrane. Its function is as follows. F(1)F(0) ATP synthase produces ATP from ADP in the presence of a proton or sodium gradient. F-type ATPases consist of two structural domains, F(1) containing the extramembraneous catalytic core and F(0) containing the membrane proton channel, linked together by a central stalk and a peripheral stalk. During catalysis, ATP synthesis in the catalytic domain of F(1) is coupled via a rotary mechanism of the central stalk subunits to proton translocation. In terms of biological role, component of the F(0) channel, it forms part of the peripheral stalk, linking F(1) to F(0). This is ATP synthase subunit b from Alkaliphilus oremlandii (strain OhILAs) (Clostridium oremlandii (strain OhILAs)).